The chain runs to 327 residues: Phenylalanine--tRNA ligase alpha subunit (327 aa).

Residue glutamate 252 participates in Mg(2+) binding.

This sequence belongs to the class-II aminoacyl-tRNA synthetase family. Phe-tRNA synthetase alpha subunit type 1 subfamily. As to quaternary structure, tetramer of two alpha and two beta subunits. Mg(2+) serves as cofactor.

The protein localises to the cytoplasm. The catalysed reaction is tRNA(Phe) + L-phenylalanine + ATP = L-phenylalanyl-tRNA(Phe) + AMP + diphosphate + H(+). The polypeptide is Phenylalanine--tRNA ligase alpha subunit (Aeromonas hydrophila subsp. hydrophila (strain ATCC 7966 / DSM 30187 / BCRC 13018 / CCUG 14551 / JCM 1027 / KCTC 2358 / NCIMB 9240 / NCTC 8049)).